Reading from the N-terminus, the 862-residue chain is ATP-dependent helicase Lhr-Core (862 aa).

ATP contacts are provided by glutamine 37, lysine 60, threonine 61, aspartate 178, glutamate 179, valine 360, arginine 377, and histidine 380. The 193-residue stretch at isoleucine 41–glutamate 233 folds into the Helicase ATP-binding domain. The DEAH box signature appears at aspartate 178–histidine 181. The Helicase C-terminal domain occupies alanine 269–aspartate 424. Residues valine 425 to proline 513 are WH domain. The segment at aspartate 514–arginine 862 is domain 4.

This sequence belongs to the Lhr helicase family. Lhr-Core subfamily. In terms of assembly, monomer.

It carries out the reaction Couples ATP hydrolysis with the unwinding of duplex DNA by translocating in the 3'-5' direction.. The catalysed reaction is ATP + H2O = ADP + phosphate + H(+). Functionally, DNA helicase that translocates in a 3'-5' direction on single-stranded (ss)DNA, probably involved in DNA repair. Most active on three- or four-stranded forked DNA; flayed structures and Holliday junction (HJ) substrates are unwound slightly less well. Also unwinds 3'-tailed duplexes; both RNA:DNA hybrids and double-stranded (ds)DNA with a 3'-single strand (ss)DNA loading strand are unwound. Substrates where the helicase loads on a 3'-ssRNA tail (DNA:RNA and RNA:RNA) were not tested. Blunt-ended dsDNA is not a substrate. Probably involved in replication-coupled DNA repair; remodeling of fork DNA after binding by Lhr generates ssDNA for ATP-dependent DNA translocation. In Methanothermobacter thermautotrophicus (strain ATCC 29096 / DSM 1053 / JCM 10044 / NBRC 100330 / Delta H) (Methanobacterium thermoautotrophicum), this protein is ATP-dependent helicase Lhr-Core.